We begin with the raw amino-acid sequence, 636 residues long: MDPSSGGGGGGGGGGSSSSSDSAPDCWDQTDMEAPGPGPCGGGGSGSGSMAAVAEAQRENLSAAFSRQLNVNAKPFVPNVHAAEFVPSFLRGPAQPPLSPAGAAGGDHGAGSGAGGPSEPVESSQDQSCEGSNSTVSMELSEPVVENGETEMSPEESWEHKEEISEAEPGGGSSGDGRPPEESTQEMMEEEEEIPKPKSAVAPPGAPKKEHVNVVFIGHVDAGKSTIGGQIMYLTGMVDKRTLEKYEREAKEKNRETWYLSWALDTNQEERDKGKTVEVGRAYFETEKKHFTILDAPGHKSFVPNMIGGASQADLAVLVISARKGEFETGFEKGGQTREHAMLAKTAGVKHLIVLINKMDDPTVNWSNERYEECKEKLVPFLKKVGFNPKKDIHFMPCSGLTGANLKEQSDFCPWYIGLPFIPYLDNLPNFNRSVDGPIRLPIVDKYKDMGTVVLGKLESGSICKGQQLVMMPNKHNVEVLGILSDDVETDSVAPGENLKIRLKGIEEEEILPGFILCDLNNLCHSGRTFDAQIVIIEHKSIICPGYNAVLHIHTCIEEVEITALICLVDKKSGEKSKTRPRFVKQDQVCIARLRTAGTICLETFKDFPQMGRFTLRDEGKTIAIGKVLKLVPEKD.

2 stretches are compositionally biased toward gly residues: residues Met1–Ser16 and Ala103–Gly116. Disordered stretches follow at residues Met1–Ala54 and Leu90–Ala206. Over residues Val121–Met138 the composition is skewed to polar residues. A compositionally biased stretch (acidic residues) spans Ser183–Glu193. Residues Lys209–Val435 form the tr-type G domain. Residues Gly218–Ser225 form a G1 region. Asp221–Thr226 is a binding site for GTP. The G2 stretch occupies residues Gly274 to Glu278. Residues Asp295–Gly298 form a G3 region. Residues Asn357–Asp360 and Ser399–Leu401 each bind GTP. The interval Asn357–Asp360 is G4. The G5 stretch occupies residues Ser399 to Leu401.

It belongs to the TRAFAC class translation factor GTPase superfamily. Classic translation factor GTPase family. ERF3 subfamily. Component of the eRF1-eRF3-GTP ternary complex, composed of ETF1/ERF1 and ERF3 (GSPT1/ERF3A or GSPT2/ERF3B) and GTP. Component of the transient SURF (SMG1-UPF1-eRF1-eRF3) complex. The ETF1-GSPT1 complex interacts with JMJD4. Interacts with PABPC1. Interacts with SHFL.

The enzyme catalyses GTP + H2O = GDP + phosphate + H(+). Its function is as follows. GTPase component of the eRF1-eRF3-GTP ternary complex, a ternary complex that mediates translation termination in response to the termination codons UAA, UAG and UGA. GSPT1/ERF3A mediates ETF1/ERF1 delivery to stop codons: The eRF1-eRF3-GTP complex binds to a stop codon in the ribosomal A-site. GTP hydrolysis by GSPT1/ERF3A induces a conformational change that leads to its dissociation, permitting ETF1/ERF1 to accommodate fully in the A-site. Component of the transient SURF complex which recruits UPF1 to stalled ribosomes in the context of nonsense-mediated decay (NMD) of mRNAs containing premature stop codons. Required for SHFL-mediated translation termination which inhibits programmed ribosomal frameshifting (-1PRF) of mRNA from viruses and cellular genes. This chain is Eukaryotic peptide chain release factor GTP-binding subunit ERF3A (Gspt1), found in Mus musculus (Mouse).